Here is a 134-residue protein sequence, read N- to C-terminus: uncharacterized protein (134 aa).

A helical membrane pass occupies residues 13–35 (FFIAFSAYLVVILLMTAVSVYYL).

The protein resides in the membrane. This is an uncharacterized protein from Archaeoglobus fulgidus (strain ATCC 49558 / DSM 4304 / JCM 9628 / NBRC 100126 / VC-16).